The chain runs to 445 residues: Trigger factor (445 aa).

The PPIase FKBP-type domain occupies 172–257 (GDQVVIDFVG…VKSVNWAHMP (86 aa)).

This sequence belongs to the FKBP-type PPIase family. Tig subfamily.

It localises to the cytoplasm. The enzyme catalyses [protein]-peptidylproline (omega=180) = [protein]-peptidylproline (omega=0). Involved in protein export. Acts as a chaperone by maintaining the newly synthesized protein in an open conformation. Functions as a peptidyl-prolyl cis-trans isomerase. The protein is Trigger factor of Polynucleobacter asymbioticus (strain DSM 18221 / CIP 109841 / QLW-P1DMWA-1) (Polynucleobacter necessarius subsp. asymbioticus).